The sequence spans 291 residues: Ribosomal RNA small subunit methyltransferase A (291 aa).

Positions 37, 39, 64, 85, 110, and 131 each coordinate S-adenosyl-L-methionine.

It belongs to the class I-like SAM-binding methyltransferase superfamily. rRNA adenine N(6)-methyltransferase family. RsmA subfamily.

The protein localises to the cytoplasm. The catalysed reaction is adenosine(1518)/adenosine(1519) in 16S rRNA + 4 S-adenosyl-L-methionine = N(6)-dimethyladenosine(1518)/N(6)-dimethyladenosine(1519) in 16S rRNA + 4 S-adenosyl-L-homocysteine + 4 H(+). Functionally, specifically dimethylates two adjacent adenosines (A1518 and A1519) in the loop of a conserved hairpin near the 3'-end of 16S rRNA in the 30S particle. May play a critical role in biogenesis of 30S subunits. The protein is Ribosomal RNA small subunit methyltransferase A of Dehalococcoides mccartyi (strain CBDB1).